Consider the following 208-residue polypeptide: Putative thymidylate kinase (208 aa).

The interval 8–15 (GIDGSGVS) is defective ATP-binding.

Belongs to the thymidylate kinase family.

The catalysed reaction is dTMP + ATP = dTDP + ADP. In Aeropyrum pernix (strain ATCC 700893 / DSM 11879 / JCM 9820 / NBRC 100138 / K1), this protein is Putative thymidylate kinase (tmk).